The chain runs to 221 residues: Alpha-ketoglutarate-dependent dioxygenase alkB homolog 7, mitochondrial (221 aa).

The N-terminal 23 residues, 1–23, are a transit peptide targeting the mitochondrion; that stretch reads MAGGGQVVLRTLSQQGWVRGSGA. Histidine 121 and aspartate 123 together coordinate Fe cation. Tyrosine 165 lines the 2-oxoglutarate pocket. Histidine 177 lines the Fe cation pocket. Residues 197-199 and arginine 203 each bind 2-oxoglutarate; that span reads RIS.

This sequence belongs to the alkB family. Fe(2+) is required as a cofactor.

It is found in the mitochondrion matrix. May function as protein hydroxylase; can catalyze auto-hydroxylation at Leu-110 (in vitro), but this activity may be due to the absence of the true substrate. Required to induce programmed necrosis in response to DNA damage caused by cytotoxic alkylating agents. Acts by triggering the collapse of mitochondrial membrane potential and loss of mitochondrial function that leads to energy depletion and cell death. ALKBH7-mediated necrosis is probably required to prevent the accumulation of cells with DNA damage. Does not display DNA demethylase activity. Involved in fatty acid metabolism. The chain is Alpha-ketoglutarate-dependent dioxygenase alkB homolog 7, mitochondrial (ALKBH7) from Bos taurus (Bovine).